Consider the following 634-residue polypeptide: ABC transporter B family member 29, chloroplastic (634 aa).

The transit peptide at 1–51 (MSFLLLTPPPCLLIPPPPLSHRRSSSLFLKHPFQPSPRPLSFCKPSALRLR) directs the protein to the chloroplast. 6 helical membrane passes run 75 to 95 (TVLLGWLCSCVSVVSLSQIVP), 119 to 139 (LVLAGLVLAKVVAYYLQQAFL), 195 to 215 (LLNTVVPSAIQISVMTAHMIV), 219 to 239 (ALTLVSAMVIPSVALLIAYLG), 307 to 327 (IVQVMYLGSLSIFCVGAVILA), and 330 to 350 (SLSSSAIVSFVASLAFLIDPV). The region spanning 77 to 362 (LLGWLCSCVS…LGKAYNELKQ (286 aa)) is the ABC transmembrane type-1 domain. The 238-residue stretch at 396–633 (VELCDISFKY…KDSLTSAGLV (238 aa)) folds into the ABC transporter domain. An ATP-binding site is contributed by 430 to 437 (GPSGGGKT).

It belongs to the ABC transporter superfamily. ABCB family. Multidrug resistance exporter (TC 3.A.1.201) subfamily.

It is found in the plastid. The protein localises to the chloroplast membrane. This chain is ABC transporter B family member 29, chloroplastic (ABCB29), found in Arabidopsis thaliana (Mouse-ear cress).